Here is a 516-residue protein sequence, read N- to C-terminus: GMP synthase [glutamine-hydrolyzing] (516 aa).

The Glutamine amidotransferase type-1 domain occupies 7-199 (KIIILDFGSQ…VFGLCKCQAT (193 aa)). Cys84 acts as the Nucleophile in catalysis. Residues His173 and Glu175 contribute to the active site. A GMPS ATP-PPase domain is found at 200 to 391 (WTMQGFIESN…LGLPDEAVHR (192 aa)). ATP is bound at residue 227–233 (SGGVDSS).

In terms of assembly, homodimer.

The enzyme catalyses XMP + L-glutamine + ATP + H2O = GMP + L-glutamate + AMP + diphosphate + 2 H(+). The protein operates within purine metabolism; GMP biosynthesis; GMP from XMP (L-Gln route): step 1/1. Functionally, catalyzes the synthesis of GMP from XMP. The protein is GMP synthase [glutamine-hydrolyzing] of Desulfotalea psychrophila (strain LSv54 / DSM 12343).